The following is a 429-amino-acid chain: Ribosomal RNA small subunit methyltransferase B (429 aa).

S-adenosyl-L-methionine is bound by residues 254-260 (CAAPGGK), D277, D303, and D322. The Nucleophile role is filled by C375.

It belongs to the class I-like SAM-binding methyltransferase superfamily. RsmB/NOP family.

The protein resides in the cytoplasm. The enzyme catalyses cytidine(967) in 16S rRNA + S-adenosyl-L-methionine = 5-methylcytidine(967) in 16S rRNA + S-adenosyl-L-homocysteine + H(+). Its function is as follows. Specifically methylates the cytosine at position 967 (m5C967) of 16S rRNA. The sequence is that of Ribosomal RNA small subunit methyltransferase B from Shigella flexneri serotype 5b (strain 8401).